The chain runs to 449 residues: MPLHIHFVGIKGTGMSALAQVTAHIEGAHITGSDVPERFFTDAVLERAHIPVLNFSAANVEKADIVVASAAYGENHEEIARARELNIPVYSYPQFLGRLMSKKRGIAVAGTHGKTTTTAMIGLALLQSGIDPTIVVGSDVPSIGGNAYSGQGDFFLAESCEYRRHFLNYSPEYLIITNIEFDHPDYFKDLDDVVCAFSEIAQKIPPHGRIFIWHEDPQRKAIQAQSPIITFGLNEEADVYATNIQFHDEGSTMTIVAHGTVLGEFHLHVSGKHNILNALASIALCLEIGVPTEKVLESLSHFNGTKRRFEHIGQNAGALIVDDYAHHPTEIRSTLEGARLSFPDRRIRAVFQPHTFSRTEKLLQEFSQSFQAADEVVIAEIFASARETNLNTISASSLADLISQQGVNARYIHSLEEIQTYLAQTLSPGDLVLTLGAGDIYKVGQSLVC.

110–116 serves as a coordination point for ATP; that stretch reads GTHGKTT.

It belongs to the MurCDEF family.

Its subcellular location is the cytoplasm. It carries out the reaction UDP-N-acetyl-alpha-D-muramate + L-alanine + ATP = UDP-N-acetyl-alpha-D-muramoyl-L-alanine + ADP + phosphate + H(+). It participates in cell wall biogenesis; peptidoglycan biosynthesis. Cell wall formation. In Desulfitobacterium hafniense (strain Y51), this protein is UDP-N-acetylmuramate--L-alanine ligase.